A 275-amino-acid polypeptide reads, in one-letter code: NH(3)-dependent NAD(+) synthetase (275 aa).

Residue 46 to 53 (GISGGQDS) participates in ATP binding. Residue Asp-52 participates in Mg(2+) binding. Arg-140 is a deamido-NAD(+) binding site. Thr-160 contacts ATP. Mg(2+) is bound at residue Glu-165. Lys-173 and Asp-180 together coordinate deamido-NAD(+). Residues Lys-189 and Thr-211 each coordinate ATP. 260 to 261 (HK) lines the deamido-NAD(+) pocket.

It belongs to the NAD synthetase family. In terms of assembly, homodimer.

It carries out the reaction deamido-NAD(+) + NH4(+) + ATP = AMP + diphosphate + NAD(+) + H(+). It participates in cofactor biosynthesis; NAD(+) biosynthesis; NAD(+) from deamido-NAD(+) (ammonia route): step 1/1. In terms of biological role, catalyzes the ATP-dependent amidation of deamido-NAD to form NAD. Uses ammonia as a nitrogen source. This is NH(3)-dependent NAD(+) synthetase from Escherichia coli O6:K15:H31 (strain 536 / UPEC).